Consider the following 338-residue polypeptide: Ketol-acid reductoisomerase (NADP(+)) (338 aa).

The KARI N-terminal Rossmann domain maps to Met-1–Thr-181. Residues Tyr-24 to Gln-27, Arg-47, Ser-50, Ser-52, and Asp-82 to Gln-85 contribute to the NADP(+) site. His-107 is an active-site residue. Residue Gly-133 participates in NADP(+) binding. In terms of domain architecture, KARI C-terminal knotted spans Ser-182–Ile-327. Positions 190, 194, 226, and 230 each coordinate Mg(2+). Ser-251 contributes to the substrate binding site.

Belongs to the ketol-acid reductoisomerase family. Mg(2+) serves as cofactor.

The enzyme catalyses (2R)-2,3-dihydroxy-3-methylbutanoate + NADP(+) = (2S)-2-acetolactate + NADPH + H(+). It catalyses the reaction (2R,3R)-2,3-dihydroxy-3-methylpentanoate + NADP(+) = (S)-2-ethyl-2-hydroxy-3-oxobutanoate + NADPH + H(+). Its pathway is amino-acid biosynthesis; L-isoleucine biosynthesis; L-isoleucine from 2-oxobutanoate: step 2/4. It functions in the pathway amino-acid biosynthesis; L-valine biosynthesis; L-valine from pyruvate: step 2/4. Functionally, involved in the biosynthesis of branched-chain amino acids (BCAA). Catalyzes an alkyl-migration followed by a ketol-acid reduction of (S)-2-acetolactate (S2AL) to yield (R)-2,3-dihydroxy-isovalerate. In the isomerase reaction, S2AL is rearranged via a Mg-dependent methyl migration to produce 3-hydroxy-3-methyl-2-ketobutyrate (HMKB). In the reductase reaction, this 2-ketoacid undergoes a metal-dependent reduction by NADPH to yield (R)-2,3-dihydroxy-isovalerate. This chain is Ketol-acid reductoisomerase (NADP(+)), found in Geobacter metallireducens (strain ATCC 53774 / DSM 7210 / GS-15).